A 249-amino-acid chain; its full sequence is 2,3-bisphosphoglycerate-dependent phosphoglycerate mutase (249 aa).

Substrate is bound by residues Arg9 to Asn16, Thr22 to Gly23, Arg61, Glu88 to Tyr91, Lys99, Arg115 to Arg116, and Gly184 to Asn185. The active-site Tele-phosphohistidine intermediate is His10. The Proton donor/acceptor role is filled by Glu88.

This sequence belongs to the phosphoglycerate mutase family. BPG-dependent PGAM subfamily. In terms of assembly, homodimer.

It carries out the reaction (2R)-2-phosphoglycerate = (2R)-3-phosphoglycerate. It functions in the pathway carbohydrate degradation; glycolysis; pyruvate from D-glyceraldehyde 3-phosphate: step 3/5. In terms of biological role, catalyzes the interconversion of 2-phosphoglycerate and 3-phosphoglycerate. The polypeptide is 2,3-bisphosphoglycerate-dependent phosphoglycerate mutase (Xanthomonas campestris pv. campestris (strain 8004)).